A 374-amino-acid polypeptide reads, in one-letter code: Glycerophosphodiester phosphodiesterase GDPD2 (374 aa).

The 289-residue stretch at 38 to 326 folds into the GP-PDE domain; that stretch reads FSVIGHRGIG…DFVEEIIEST (289 aa). The tract at residues 330 to 349 is disordered; it reads MIRPPPSSSPLPSPSKDDDV. The span at 332 to 342 shows a compositional bias: pro residues; it reads RPPPSSSPLPS.

This sequence belongs to the glycerophosphoryl diester phosphodiesterase family. As to expression, expressed in roots, shoots, flowers and siliques.

It catalyses the reaction a sn-glycero-3-phosphodiester + H2O = an alcohol + sn-glycerol 3-phosphate + H(+). This chain is Glycerophosphodiester phosphodiesterase GDPD2, found in Arabidopsis thaliana (Mouse-ear cress).